We begin with the raw amino-acid sequence, 494 residues long: Protein DETOXIFICATION 21 (494 aa).

Ala2 carries the post-translational modification N-acetylalanine. A run of 12 helical transmembrane segments spans residues 40-60 (LWIVAAPAIFTRFSTFGVSII), 73-95 (LAAYSITFTVLLRFSNGILLGMA), 123-143 (IVLTGCTICLTPVYIFSGPIL), 158-178 (IIALWVIGINFSFVPSFTCQM), 188-208 (IIAYVAAVSLGVHVFLSWLLM), 217-237 (GAMTSTLVAFWLPNIAQLLFV), 268-288 (GGMLCLELWYNSILVLLTGNL), 297-317 (ALAICLNINGLEMMIALGFLA), 340-360 (LTAVFTSLSLGIVLFFVFLFL), 384-404 (LLAFSILMNSVQPVLSGVAVG), 416-436 (LACYYLVGIPIGIILGYVVGL), and 441-461 (VWIGMLFGIFVQTCVLTVMTL).

It belongs to the multi antimicrobial extrusion (MATE) (TC 2.A.66.1) family.

It is found in the membrane. The protein is Protein DETOXIFICATION 21 of Arabidopsis thaliana (Mouse-ear cress).